Reading from the N-terminus, the 136-residue chain is Large ribosomal subunit protein uL16c (136 aa).

The protein belongs to the universal ribosomal protein uL16 family. Part of the 50S ribosomal subunit.

Its subcellular location is the plastid. The protein localises to the chloroplast. The chain is Large ribosomal subunit protein uL16c from Mesostigma viride (Green alga).